A 143-amino-acid chain; its full sequence is Endoribonuclease YbeY (143 aa).

Zn(2+)-binding residues include His-106, His-110, and His-116.

The protein belongs to the endoribonuclease YbeY family. Zn(2+) serves as cofactor.

The protein resides in the cytoplasm. Functionally, single strand-specific metallo-endoribonuclease involved in late-stage 70S ribosome quality control and in maturation of the 3' terminus of the 16S rRNA. The chain is Endoribonuclease YbeY from Petrotoga mobilis (strain DSM 10674 / SJ95).